The primary structure comprises 381 residues: Flap endonuclease 1 (381 aa).

The segment at 1–105 is N-domain; the sequence is MGIKNLATLI…YELDKRKVRR (105 aa). Aspartate 34 lines the Mg(2+) pocket. 2 residues coordinate DNA: arginine 47 and arginine 71. Mg(2+)-binding residues include aspartate 87, glutamate 156, glutamate 158, aspartate 177, and aspartate 179. An I-domain region spans residues 120 to 251; the sequence is EIIKHERRLV…VNALKLIKEH (132 aa). DNA is bound at residue glutamate 156. Glycine 229 and aspartate 231 together coordinate DNA. Aspartate 231 contributes to the Mg(2+) binding site. An interaction with PCNA region spans residues 339–347; the sequence is VQKRLDSFF. The tract at residues 360–381 is disordered; it reads AAKKAKDAKKKAAAKGKIAKRR. Residues 365-381 are compositionally biased toward basic residues; it reads KDAKKKAAAKGKIAKRR.

This sequence belongs to the XPG/RAD2 endonuclease family. FEN1 subfamily. In terms of assembly, interacts with PCNA. Three molecules of FEN1 bind to one PCNA trimer with each molecule binding to one PCNA monomer. PCNA stimulates the nuclease activity without altering cleavage specificity. Mg(2+) is required as a cofactor. Phosphorylated. Phosphorylation upon DNA damage induces relocalization to the nuclear plasma.

The protein resides in the nucleus. Its subcellular location is the nucleolus. It localises to the nucleoplasm. It is found in the mitochondrion. Functionally, structure-specific nuclease with 5'-flap endonuclease and 5'-3' exonuclease activities involved in DNA replication and repair. During DNA replication, cleaves the 5'-overhanging flap structure that is generated by displacement synthesis when DNA polymerase encounters the 5'-end of a downstream Okazaki fragment. It enters the flap from the 5'-end and then tracks to cleave the flap base, leaving a nick for ligation. Also involved in the long patch base excision repair (LP-BER) pathway, by cleaving within the apurinic/apyrimidinic (AP) site-terminated flap. Acts as a genome stabilization factor that prevents flaps from equilibrating into structures that lead to duplications and deletions. Also possesses 5'-3' exonuclease activity on nicked or gapped double-stranded DNA, and exhibits RNase H activity. Also involved in replication and repair of rDNA and in repairing mitochondrial DNA. The polypeptide is Flap endonuclease 1 (Kluyveromyces lactis (strain ATCC 8585 / CBS 2359 / DSM 70799 / NBRC 1267 / NRRL Y-1140 / WM37) (Yeast)).